The primary structure comprises 212 residues: Redox-sensing transcriptional repressor Rex (212 aa).

The H-T-H motif DNA-binding region spans 17–56 (LYARSLRYLLEEGIHSVSSQELGERINVTAAQIRKDLSYF). 91-96 (GIGLLG) is an NAD(+) binding site.

The protein belongs to the transcriptional regulatory Rex family. Homodimer.

The protein resides in the cytoplasm. Its function is as follows. Modulates transcription in response to changes in cellular NADH/NAD(+) redox state. The polypeptide is Redox-sensing transcriptional repressor Rex (Chloroflexus aggregans (strain MD-66 / DSM 9485)).